The following is a 276-amino-acid chain: Ribosomal RNA small subunit methyltransferase A (276 aa).

S-adenosyl-L-methionine is bound by residues Asn-27, Leu-29, Gly-54, Glu-75, Asp-101, and Asn-123.

Belongs to the class I-like SAM-binding methyltransferase superfamily. rRNA adenine N(6)-methyltransferase family. RsmA subfamily.

It localises to the cytoplasm. It carries out the reaction adenosine(1518)/adenosine(1519) in 16S rRNA + 4 S-adenosyl-L-methionine = N(6)-dimethyladenosine(1518)/N(6)-dimethyladenosine(1519) in 16S rRNA + 4 S-adenosyl-L-homocysteine + 4 H(+). Specifically dimethylates two adjacent adenosines (A1518 and A1519) in the loop of a conserved hairpin near the 3'-end of 16S rRNA in the 30S particle. May play a critical role in biogenesis of 30S subunits. The chain is Ribosomal RNA small subunit methyltransferase A from Bartonella tribocorum (strain CIP 105476 / IBS 506).